A 262-amino-acid chain; its full sequence is Sulfite reductase, dissimilatory-type subunit beta (262 aa).

[4Fe-4S] cluster-binding residues include Cys-151, Cys-188, Cys-189, Cys-193, Cys-231, Cys-258, and Cys-261. Cys-193 is a siroheme binding site.

As to quaternary structure, heterohexamer of two alpha, two beta and two gamma subunits. The cofactor is [4Fe-4S] cluster. It depends on siroheme as a cofactor.

It carries out the reaction [DsrC protein]-trisulfide + NAD(+) + 3 H2O = [DsrC protein]-dithiol + sulfite + NADH + 3 H(+). In terms of biological role, catalyzes the reduction of sulfite to sulfide. This is the terminal oxidation reaction in sulfate respiration, a process catalyzed by the sulfate-reducing bacteria. In Megalodesulfovibrio gigas (strain ATCC 19364 / DSM 1382 / NCIMB 9332 / VKM B-1759) (Desulfovibrio gigas), this protein is Sulfite reductase, dissimilatory-type subunit beta (dsrB).